Consider the following 210-residue polypeptide: Cytochrome c biogenesis ATP-binding export protein CcmA (210 aa).

The ABC transporter domain occupies 1–208 (MHLNQLVISH…KVRTLSLDQF (208 aa)). 38–45 (GHNGIGKT) contributes to the ATP binding site.

It belongs to the ABC transporter superfamily. CcmA exporter (TC 3.A.1.107) family. In terms of assembly, the complex is composed of two ATP-binding proteins (CcmA) and two transmembrane proteins (CcmB).

The protein resides in the cell inner membrane. The catalysed reaction is heme b(in) + ATP + H2O = heme b(out) + ADP + phosphate + H(+). Its function is as follows. Part of the ABC transporter complex CcmAB involved in the biogenesis of c-type cytochromes; once thought to export heme, this seems not to be the case, but its exact role is uncertain. Responsible for energy coupling to the transport system. The sequence is that of Cytochrome c biogenesis ATP-binding export protein CcmA from Haemophilus ducreyi (strain 35000HP / ATCC 700724).